The sequence spans 149 residues: MHCPFCSAVDTKVIDSRLVAEGHQVRRRRECLLCHERFTTFEMAELVMPRVIKSNGSREPFNEEKLRGGILRALEKRPVSMEAIEKGVNHIKSCLRATGEREVASQLVGNLVMDELKSLDKVAYIRFASVYRSFEDIREFGEEIAKLEK.

Residues 3 to 34 fold into a zinc finger; it reads CPFCSAVDTKVIDSRLVAEGHQVRRRRECLLC. One can recognise an ATP-cone domain in the interval 49-139; sequence PRVIKSNGSR…VYRSFEDIRE (91 aa).

It belongs to the NrdR family. Requires Zn(2+) as cofactor.

In terms of biological role, negatively regulates transcription of bacterial ribonucleotide reductase nrd genes and operons by binding to NrdR-boxes. The protein is Transcriptional repressor NrdR of Aeromonas salmonicida (strain A449).